We begin with the raw amino-acid sequence, 917 residues long: ABC transporter A family member 12 (917 aa).

6 consecutive transmembrane segments (helical) span residues 34 to 54, 323 to 343, 377 to 397, 409 to 429, 435 to 455, and 508 to 528; these read LILV…VLDA, IASL…FPVI, FLTI…AIGL, FVFY…VSSI, TVTV…SFLF, and GEVF…AYYI. The region spanning 595 to 832 is the ABC transporter domain; it reads ILCDNLKKVY…YGGSYVFTMT (238 aa). 633–640 is a binding site for ATP; that stretch reads GPNGAGKT.

This sequence belongs to the ABC transporter superfamily. ABCA family. CPR flippase (TC 3.A.1.211) subfamily.

Its subcellular location is the membrane. This Arabidopsis thaliana (Mouse-ear cress) protein is ABC transporter A family member 12 (ABCA12).